The chain runs to 348 residues: Dihydroorotase (348 aa).

Positions 17 and 19 each coordinate Zn(2+). Substrate is bound by residues 19–21 (HLR) and N45. Residues K103, H140, and H178 each contribute to the Zn(2+) site. The residue at position 103 (K103) is an N6-carboxylysine. H140 is a substrate binding site. L223 contacts substrate. D251 lines the Zn(2+) pocket. D251 is an active-site residue. Residues H255 and A267 each coordinate substrate.

The protein belongs to the metallo-dependent hydrolases superfamily. DHOase family. Class II DHOase subfamily. As to quaternary structure, homodimer. Requires Zn(2+) as cofactor.

It carries out the reaction (S)-dihydroorotate + H2O = N-carbamoyl-L-aspartate + H(+). It participates in pyrimidine metabolism; UMP biosynthesis via de novo pathway; (S)-dihydroorotate from bicarbonate: step 3/3. Its function is as follows. Catalyzes the reversible cyclization of carbamoyl aspartate to dihydroorotate. The chain is Dihydroorotase from Salmonella heidelberg (strain SL476).